The primary structure comprises 212 residues: Glycerol-3-phosphate acyltransferase (212 aa).

Transmembrane regions (helical) follow at residues 10-30 (FAALLIVLAYLIGCVPFAVVV), 90-110 (GYGLVLIAVFLGHLYPVSLGF), 124-144 (FAVSPWLALATVATWLLVAVV), 150-170 (LAALVAAFLAPVYYFFGGGTI), and 171-191 (WPLNAPTAAALVGVSALLFYR).

The protein belongs to the PlsY family. As to quaternary structure, probably interacts with PlsX.

The protein localises to the cell inner membrane. The enzyme catalyses an acyl phosphate + sn-glycerol 3-phosphate = a 1-acyl-sn-glycero-3-phosphate + phosphate. It functions in the pathway lipid metabolism; phospholipid metabolism. In terms of biological role, catalyzes the transfer of an acyl group from acyl-phosphate (acyl-PO(4)) to glycerol-3-phosphate (G3P) to form lysophosphatidic acid (LPA). This enzyme utilizes acyl-phosphate as fatty acyl donor, but not acyl-CoA or acyl-ACP. The sequence is that of Glycerol-3-phosphate acyltransferase from Bordetella avium (strain 197N).